The following is a 612-amino-acid chain: MSAVSQPQAAHAPLEKPASTAILCNTCGNVCKGEVLRVQNKYFHIRCFVCKACGCDLAEGGFFVRQGEHICTRDYQRLYGTRCFSCDRFIEGEVVSALGKTYHPDCFVCAVCRLPFPPGDRVTFNGKECMCQKCSPPTLLGNSAHVAQGLRSCGGCGLEIKNGQALVALDKHWHLGCFKCKTCGKLLNAEYISKDGLPYCEADYHSKFGIRCDGCEKYITGRVLEAGEKHYHPSCALCVRCGQMFSEGEEMYLQGSSIWHPACRQAARTEDKSKETRTSSESIVSVPASSTSGSPSRVIYAKLGDEILDYRDLAALPKNKAIYNIDRPDMISYSPYISHSAVGDRQSYGEGDQDDRSYKQCRTSSPSSAGSVSLGHYTPTSRSPQHYSRPGSESGRSTPSLSVHSDSRPPSSTYQQAPRHFHVPDTGVKDNIYRKPPIYKQHAARRLDVEDSSFDQDSRKKTTWLLLKGDADTRTNSPDLDSQSLSLSSGTDQEPLQRMAGDSLYSRFPYSKPDTLPGPRKDGLDLRNANLAPCGADPDASWGTREYKIYPYDSLIVTNRIRVKLPKDVDRTRLERHLSPEEFQEVFGMSIEEFDRLALWKRNDLKKKALLF.

LIM zinc-binding domains are found at residues 22–81 (ILCN…LYGT), 81–141 (TRCF…TLLG), 151–210 (RSCG…KFGI), and 210–270 (IRCD…ARTE). Zn(2+) contacts are provided by C83, C86, H103, C106, C109, C112, C131, and C134. The Zn(2+) site is built by C212, C215, H232, C235, C238, C241, H260, and C263. Basic and acidic residues predominate over residues 269–278 (TEDKSKETRT). Disordered stretches follow at residues 269–295 (TEDK…SGSP) and 341–433 (AVGD…DNIY). Low complexity predominate over residues 279–295 (SSESIVSVPASSTSGSP). Residues S282, S294, G351, R356, S365, and S368 each carry the phosphoserine modification. Low complexity predominate over residues 364 to 373 (SSPSSAGSVS). The segment covering 394-416 (SGRSTPSLSVHSDSRPPSSTYQQ) has biased composition (polar residues). S453 carries the post-translational modification Phosphoserine. The tract at residues 471–498 (ADTRTNSPDLDSQSLSLSSGTDQEPLQR) is disordered. Position 473 is a phosphothreonine (T473). Phosphoserine is present on residues S477 and S579. Low complexity predominate over residues 477–489 (SPDLDSQSLSLSS). Positions 544 to 612 (TREYKIYPYD…NDLKKKALLF (69 aa)) constitute an HP domain.

In terms of assembly, interacts with F-actin and ABRA. In terms of tissue distribution, expressed in brain. Highly expressed in caudate/putamen, moderately expressed in the olfactory bulb. In the hippocampus, expressed in the CA1, CA2 and CA3 fields. In the cerebellum, expressed in Purkinje cells.

It is found in the cytoplasm. May act as scaffold protein. May stimulate ABRA activity and ABRA-dependent SRF transcriptional activity. This chain is Actin-binding LIM protein 2 (Ablim2), found in Mus musculus (Mouse).